Reading from the N-terminus, the 224-residue chain is Uracil phosphoribosyltransferase (224 aa).

Residue 38 to 42 participates in GTP binding; that stretch reads KGLVK. Residues R87, R112, and 140–148 contribute to the 5-phospho-alpha-D-ribose 1-diphosphate site; that span reads DPMIATGST. Uracil is bound by residues I204 and 209–211; that span reads GDA. D210 contacts 5-phospho-alpha-D-ribose 1-diphosphate.

It belongs to the UPRTase family. Requires Mg(2+) as cofactor.

It carries out the reaction UMP + diphosphate = 5-phospho-alpha-D-ribose 1-diphosphate + uracil. Its pathway is pyrimidine metabolism; UMP biosynthesis via salvage pathway; UMP from uracil: step 1/1. Allosterically activated by GTP. In terms of biological role, catalyzes the conversion of uracil and 5-phospho-alpha-D-ribose 1-diphosphate (PRPP) to UMP and diphosphate. This chain is Uracil phosphoribosyltransferase, found in Thermococcus gammatolerans (strain DSM 15229 / JCM 11827 / EJ3).